The primary structure comprises 204 residues: Putative glutathione S-transferase alpha-3 (204 aa).

Threonine 2 is subject to N-acetylthreonine. The GST N-terminal domain occupies 2-79 (TKPQLSYFKV…YIASQHDFVG (78 aa)). Glutathione contacts are provided by residues tyrosine 8, 49-50 (QL), and 63-64 (QS). Residues 81 to 202 (TPEEKALVDE…YLKNRPITER (122 aa)) form the GST C-terminal domain.

This sequence belongs to the GST superfamily. Alpha family.

The catalysed reaction is RX + glutathione = an S-substituted glutathione + a halide anion + H(+). Conjugation of reduced glutathione to a wide number of exogenous and endogenous hydrophobic electrophiles. The polypeptide is Putative glutathione S-transferase alpha-3 (gsta3) (Dictyostelium discoideum (Social amoeba)).